The chain runs to 114 residues: T cell receptor beta variable 5-6 (114 aa).

An N-terminal signal peptide occupies residues 1–21; sequence MGPGLLCWALLCLLGAGLVDA. The Ig-like domain occupies 22 to 114; that stretch reads GVTQSPTHLI…SALYLCASSL (93 aa). Cysteines 42 and 110 form a disulfide. N90 is a glycosylation site (N-linked (GlcNAc...) asparagine).

As to quaternary structure, alpha-beta TR is a heterodimer composed of an alpha and beta chain; disulfide-linked. The alpha-beta TR is associated with the transmembrane signaling CD3 coreceptor proteins to form the TR-CD3 (TcR or TCR). The assembly of alpha-beta TR heterodimers with CD3 occurs in the endoplasmic reticulum where a single alpha-beta TR heterodimer associates with one CD3D-CD3E heterodimer, one CD3G-CD3E heterodimer and one CD247 homodimer forming a stable octameric structure. CD3D-CD3E and CD3G-CD3E heterodimers preferentially associate with TR alpha and TR beta chains, respectively. The association of the CD247 homodimer is the last step of TcR assembly in the endoplasmic reticulum and is required for transport to the cell surface.

Its subcellular location is the cell membrane. Functionally, v region of the variable domain of T cell receptor (TR) beta chain that participates in the antigen recognition. Alpha-beta T cell receptors are antigen specific receptors which are essential to the immune response and are present on the cell surface of T lymphocytes. Recognize peptide-major histocompatibility (MH) (pMH) complexes that are displayed by antigen presenting cells (APC), a prerequisite for efficient T cell adaptive immunity against pathogens. Binding of alpha-beta TR to pMH complex initiates TR-CD3 clustering on the cell surface and intracellular activation of LCK that phosphorylates the ITAM motifs of CD3G, CD3D, CD3E and CD247 enabling the recruitment of ZAP70. In turn ZAP70 phosphorylates LAT, which recruits numerous signaling molecules to form the LAT signalosome. The LAT signalosome propagates signal branching to three major signaling pathways, the calcium, the mitogen-activated protein kinase (MAPK) kinase and the nuclear factor NF-kappa-B (NF-kB) pathways, leading to the mobilization of transcription factors that are critical for gene expression and essential for T cell growth and differentiation. The T cell repertoire is generated in the thymus, by V-(D)-J rearrangement. This repertoire is then shaped by intrathymic selection events to generate a peripheral T cell pool of self-MH restricted, non-autoaggressive T cells. Post-thymic interaction of alpha-beta TR with the pMH complexes shapes TR structural and functional avidity. In Homo sapiens (Human), this protein is T cell receptor beta variable 5-6.